Reading from the N-terminus, the 158-residue chain is Small ribosomal subunit protein uS15 (158 aa).

Residues 1 to 18 are compositionally biased toward basic residues; that stretch reads MARMHARKRGKSGSKRPP. Residues 1–21 are disordered; it reads MARMHARKRGKSGSKRPPRTA.

This sequence belongs to the universal ribosomal protein uS15 family. As to quaternary structure, part of the 30S ribosomal subunit.

In Pyrococcus horikoshii (strain ATCC 700860 / DSM 12428 / JCM 9974 / NBRC 100139 / OT-3), this protein is Small ribosomal subunit protein uS15.